A 569-amino-acid chain; its full sequence is Urease subunit alpha (569 aa).

Residues 131–569 (GGIDAHIHWI…LPLAQRYFLF (439 aa)) enclose the Urease domain. Histidine 136, histidine 138, and lysine 219 together coordinate Ni(2+). Residue lysine 219 is modified to N6-carboxylysine. Histidine 221 serves as a coordination point for substrate. Ni(2+) contacts are provided by histidine 248 and histidine 274. Histidine 322 acts as the Proton donor in catalysis. Aspartate 362 lines the Ni(2+) pocket.

This sequence belongs to the metallo-dependent hydrolases superfamily. Urease alpha subunit family. Heterotrimer of UreA (gamma), UreB (beta) and UreC (alpha) subunits. Three heterotrimers associate to form the active enzyme. Ni cation serves as cofactor. Post-translationally, carboxylation allows a single lysine to coordinate two nickel ions.

Its subcellular location is the cytoplasm. It carries out the reaction urea + 2 H2O + H(+) = hydrogencarbonate + 2 NH4(+). Its pathway is nitrogen metabolism; urea degradation; CO(2) and NH(3) from urea (urease route): step 1/1. The protein is Urease subunit alpha of Magnetococcus marinus (strain ATCC BAA-1437 / JCM 17883 / MC-1).